The chain runs to 174 residues: Adipose-secreted signaling protein (174 aa).

The residue at position 2 (alanine 2) is an N-acetylalanine. Threonine 147 is modified (phosphothreonine).

Belongs to the ADISSP family. Expression is adipose-specific and highly brown adipose tissue-enriched.

Its subcellular location is the secreted. Its function is as follows. Adipocyte-secreted protein (adipokine) that acts as a key regulator for white adipose tissue (WAT) thermogenesis and glucose homeostasis at least in part through activation of protein kinase A (PKA). The protein is Adipose-secreted signaling protein of Mus musculus (Mouse).